The chain runs to 166 residues: Endoribonuclease YbeY (166 aa).

Zn(2+) contacts are provided by histidine 130, histidine 134, and histidine 140.

Belongs to the endoribonuclease YbeY family. It depends on Zn(2+) as a cofactor.

Its subcellular location is the cytoplasm. In terms of biological role, single strand-specific metallo-endoribonuclease involved in late-stage 70S ribosome quality control and in maturation of the 3' terminus of the 16S rRNA. The polypeptide is Endoribonuclease YbeY (Streptococcus uberis (strain ATCC BAA-854 / 0140J)).